A 60-amino-acid polypeptide reads, in one-letter code: UPF0434 protein Aave_2563 (60 aa).

It belongs to the UPF0434 family.

The protein is UPF0434 protein Aave_2563 of Paracidovorax citrulli (strain AAC00-1) (Acidovorax citrulli).